The following is a 670-amino-acid chain: DNA ligase (670 aa).

NAD(+) is bound by residues 32–36, 81–82, and Glu114; these read DSEYD and SL. The N6-AMP-lysine intermediate role is filled by Lys116. NAD(+) contacts are provided by Arg137, Glu174, Lys291, and Lys315. 4 residues coordinate Zn(2+): Cys409, Cys412, Cys427, and Cys433. The region spanning 592–670 is the BRCT domain; that stretch reads ASENLFKDKT…EEEFLAQITR (79 aa).

It belongs to the NAD-dependent DNA ligase family. LigA subfamily. It depends on Mg(2+) as a cofactor. Mn(2+) serves as cofactor.

The enzyme catalyses NAD(+) + (deoxyribonucleotide)n-3'-hydroxyl + 5'-phospho-(deoxyribonucleotide)m = (deoxyribonucleotide)n+m + AMP + beta-nicotinamide D-nucleotide.. Its function is as follows. DNA ligase that catalyzes the formation of phosphodiester linkages between 5'-phosphoryl and 3'-hydroxyl groups in double-stranded DNA using NAD as a coenzyme and as the energy source for the reaction. It is essential for DNA replication and repair of damaged DNA. This chain is DNA ligase, found in Haemophilus influenzae (strain 86-028NP).